Consider the following 88-residue polypeptide: Long neurotoxin 20 (88 aa).

A signal peptide spans Met-1–Ser-21. Cystine bridges form between Cys-24/Cys-42, Cys-35/Cys-63, Cys-48/Cys-52, Cys-67/Cys-78, and Cys-79/Cys-84.

The protein belongs to the three-finger toxin family. Long-chain subfamily. Type II alpha-neurotoxin sub-subfamily. As to expression, expressed by the venom gland.

It localises to the secreted. In terms of biological role, binds with high affinity to muscular (alpha-1/CHRNA1) and neuronal (alpha-7/CHRNA7) nicotinic acetylcholine receptor (nAChR) and inhibits acetylcholine from binding to the receptor, thereby impairing neuromuscular and neuronal transmission. This chain is Long neurotoxin 20, found in Drysdalia coronoides (White-lipped snake).